The primary structure comprises 193 residues: E3 ubiquitin-protein ligase RMA2 (193 aa).

The segment at 21–75 adopts an RING-type zinc-finger fold; it reads CNICLDQVRDPVVTLCGHLFCWPCIHKWTYASNNSRQRVDQYDHKREPPKCPVCK. The helical; Anchor for type IV membrane protein transmembrane segment at 175-192 threads the bilayer; that stretch reads LSRVYLFLLCFMFMCLFL.

Interacts with ERABP1. In terms of tissue distribution, barely detected in roots and limited to the root tips. Expressed in leaf hydathodes and in siliques.

The protein resides in the endoplasmic reticulum membrane. The enzyme catalyses S-ubiquitinyl-[E2 ubiquitin-conjugating enzyme]-L-cysteine + [acceptor protein]-L-lysine = [E2 ubiquitin-conjugating enzyme]-L-cysteine + N(6)-ubiquitinyl-[acceptor protein]-L-lysine.. Its pathway is protein modification; protein ubiquitination. Functionally, E3 ubiquitin-protein ligase that promotes the ubiquitination and proteasomal degradation of the auxin-binding protein ERABP1. The polypeptide is E3 ubiquitin-protein ligase RMA2 (RMA2) (Arabidopsis thaliana (Mouse-ear cress)).